The primary structure comprises 40 residues: Photosystem II reaction center protein J (40 aa).

The helical transmembrane segment at 8–28 (IPLWLIGTVVGTPVISLVGIF) threads the bilayer.

This sequence belongs to the PsbJ family. As to quaternary structure, PSII is composed of 1 copy each of membrane proteins PsbA, PsbB, PsbC, PsbD, PsbE, PsbF, PsbH, PsbI, PsbJ, PsbK, PsbL, PsbM, PsbT, PsbX, PsbY, PsbZ, Psb30/Ycf12, at least 3 peripheral proteins of the oxygen-evolving complex and a large number of cofactors. It forms dimeric complexes.

Its subcellular location is the plastid. The protein resides in the chloroplast thylakoid membrane. One of the components of the core complex of photosystem II (PSII). PSII is a light-driven water:plastoquinone oxidoreductase that uses light energy to abstract electrons from H(2)O, generating O(2) and a proton gradient subsequently used for ATP formation. It consists of a core antenna complex that captures photons, and an electron transfer chain that converts photonic excitation into a charge separation. The sequence is that of Photosystem II reaction center protein J from Huperzia lucidula (Shining clubmoss).